The chain runs to 326 residues: UDP-3-O-acylglucosamine N-acyltransferase (326 aa).

Histidine 225 (proton acceptor) is an active-site residue.

Belongs to the transferase hexapeptide repeat family. LpxD subfamily. In terms of assembly, homotrimer.

It catalyses the reaction a UDP-3-O-[(3R)-3-hydroxyacyl]-alpha-D-glucosamine + a (3R)-hydroxyacyl-[ACP] = a UDP-2-N,3-O-bis[(3R)-3-hydroxyacyl]-alpha-D-glucosamine + holo-[ACP] + H(+). Its pathway is bacterial outer membrane biogenesis; LPS lipid A biosynthesis. Catalyzes the N-acylation of UDP-3-O-acylglucosamine using 3-hydroxyacyl-ACP as the acyl donor. Is involved in the biosynthesis of lipid A, a phosphorylated glycolipid that anchors the lipopolysaccharide to the outer membrane of the cell. This is UDP-3-O-acylglucosamine N-acyltransferase from Acidovorax ebreus (strain TPSY) (Diaphorobacter sp. (strain TPSY)).